The sequence spans 554 residues: Intraflagellar transport protein 56 (554 aa).

The interval 1–27 (MMLSRAKPAVGGESPHTDKRKKKGRKI) is disordered. Residues 18-27 (DKRKKKGRKI) are compositionally biased toward basic residues. 4 TPR repeats span residues 57-90 (EDTNLWIGYCAFHLGDYKRALEEYENAAKEENCN), 92-125 (EVWVNLACTYFFLGMYKQAEAAGFKAPKSRLQNR), 151-184 (KEDQLSLASIHYMRSHYQEAIDIYKRILLDNREY), and 468-501 (ANDCYKMGQFYYSAKAFDVLERLDPNPEYWEGKR).

Belongs to the IFT56 family. Component of the IFT complex B. Interacts with IFT46; the interaction is direct.

The protein resides in the cell projection. Its subcellular location is the cilium. Component of the intraflagellar transport (IFT) complex B required for transport of proteins in the motile cilium. Required for transport of specific ciliary cargo proteins related to motility, while it is neither required for IFT complex B assembly or motion nor for cilium assembly. Required for efficient coupling between the accumulation of GLI2 and GLI3 at the ciliary tips and their dissociation from the negative regulator SUFU. Plays a key role in maintaining the integrity of the IFT complex B and the proper ciliary localization of the IFT complex B components. Not required for IFT complex A ciliary localization or function. Essential for maintaining proper microtubule organization within the ciliary axoneme. The polypeptide is Intraflagellar transport protein 56 (Rattus norvegicus (Rat)).